Reading from the N-terminus, the 258-residue chain is MAVISMKELLEAGVHFGHQTRRWDPKMDEYIFTERNGIHIIDLQKTVKLVDEAYNFMRNASTDGANFLFVGTKKQASDAIAEEAARAGQYFINHRWLGGTLTNWNTIKTRIQRLKDLEAMAEDGTFEQLPKKEVVLLNKQREKLNKFLGGIKDMPGLPDVLFVVDPKKEEIAVKEANMLNIPVVAMIDTNANPEVVDVKIPANDDAIRAVRLITAKMADAIIEGRQGQDSAPEDAFVAGDENTESIEEIANIVEEGNN.

It belongs to the universal ribosomal protein uS2 family.

The chain is Small ribosomal subunit protein uS2 from Leuconostoc citreum (strain KM20).